A 443-amino-acid polypeptide reads, in one-letter code: Putative F-box/FBD/LRR-repeat protein At5g22670 (443 aa).

The F-box domain maps to 10 to 56 (QDSISLLPDDLLCRILSNLPTKVAVRTSVLSKRWKRFSLSVPLLEFN). 5 LRR repeats span residues 139-165 (SLRL…HLID), 166-191 (NIYP…NVSR), 219-243 (YGDI…SLRD), 275-300 (NFLL…TMSG), and 325-353 (YAVF…VLEL). The region spanning 361 to 412 (LLILSSSIPKCLRSSLEHVEIHTPISGAEAEMKLVKYFLENSAVLKKFTLQL) is the FBD domain.

In Arabidopsis thaliana (Mouse-ear cress), this protein is Putative F-box/FBD/LRR-repeat protein At5g22670.